A 260-amino-acid polypeptide reads, in one-letter code: Protein-L-isoaspartate O-methyltransferase (260 aa).

Residues 1 to 27 form a disordered region; the sequence is MKSPVAGAVLDPSTPPPTTGTSWRWPG. Ser92 is an active-site residue.

Belongs to the methyltransferase superfamily. L-isoaspartyl/D-aspartyl protein methyltransferase family.

Its subcellular location is the cytoplasm. The enzyme catalyses [protein]-L-isoaspartate + S-adenosyl-L-methionine = [protein]-L-isoaspartate alpha-methyl ester + S-adenosyl-L-homocysteine. In terms of biological role, catalyzes the methyl esterification of L-isoaspartyl residues in peptides and proteins that result from spontaneous decomposition of normal L-aspartyl and L-asparaginyl residues. It plays a role in the repair and/or degradation of damaged proteins. The polypeptide is Protein-L-isoaspartate O-methyltransferase (pcm) (Aeropyrum pernix (strain ATCC 700893 / DSM 11879 / JCM 9820 / NBRC 100138 / K1)).